The primary structure comprises 305 residues: Acetyl-coenzyme A carboxylase carboxyl transferase subunit beta (305 aa).

The CoA carboxyltransferase N-terminal domain maps to 25–294 (VWTKCDSCGQ…PGNDDVEIRS (270 aa)). The Zn(2+) site is built by C29, C32, C48, and C51. The C4-type zinc-finger motif lies at 29-51 (CDSCGQVLYRAELERNLGVCPKC). Residues 281 to 305 (NHPEPGNDDVEIRSDAPSESSQDDA) form a disordered region.

The protein belongs to the AccD/PCCB family. Acetyl-CoA carboxylase is a heterohexamer composed of biotin carboxyl carrier protein (AccB), biotin carboxylase (AccC) and two subunits each of ACCase subunit alpha (AccA) and ACCase subunit beta (AccD). Zn(2+) is required as a cofactor.

The protein localises to the cytoplasm. It catalyses the reaction N(6)-carboxybiotinyl-L-lysyl-[protein] + acetyl-CoA = N(6)-biotinyl-L-lysyl-[protein] + malonyl-CoA. The protein operates within lipid metabolism; malonyl-CoA biosynthesis; malonyl-CoA from acetyl-CoA: step 1/1. Its function is as follows. Component of the acetyl coenzyme A carboxylase (ACC) complex. Biotin carboxylase (BC) catalyzes the carboxylation of biotin on its carrier protein (BCCP) and then the CO(2) group is transferred by the transcarboxylase to acetyl-CoA to form malonyl-CoA. This Pectobacterium atrosepticum (strain SCRI 1043 / ATCC BAA-672) (Erwinia carotovora subsp. atroseptica) protein is Acetyl-coenzyme A carboxylase carboxyl transferase subunit beta.